The following is a 624-amino-acid chain: Iron transport multicopper oxidase FET3 (624 aa).

Positions 1-20 (MRTFLSSFIILTTFLASLIA) are cleaved as a signal peptide. The Extracellular portion of the chain corresponds to 21 to 555 (AETHTWYFKT…KRLPTGFTTK (535 aa)). Plastocyanin-like domains lie at 46–144 (IGFN…FIIE) and 190–292 (NFLF…LQVN). N-linked (GlcNAc...) asparagine glycosylation is found at Asn-49 and Asn-77. Residues His-81 and His-83 each contribute to the Cu cation site. N-linked (GlcNAc...) asparagine glycosylation occurs at Asn-113. The Cu cation site is built by His-126 and His-128. Asn-194, Asn-198, Asn-244, Asn-265, Asn-292, Asn-300, and Asn-359 each carry an N-linked (GlcNAc...) asparagine glycan. In terms of domain architecture, Plastocyanin-like 3 spans 382–499 (NELIYGTNTN…QGLAVVLIED (118 aa)). 3 residues coordinate Cu cation: His-413, His-416, and His-418. N-linked (GlcNAc...) asparagine glycosylation occurs at Asn-441. Cu cation contacts are provided by His-481, Cys-482, His-483, and His-487. The helical transmembrane segment at 556–576 (GIVALVFSCVAAFLGLFSFSF) threads the bilayer. The Cytoplasmic segment spans residues 577–624 (YGMNDIAHVEDKVARDLDIDLEAENEDEEEAVVLNQNSSSSDSNSKPH). A disordered region spans residues 603 to 624 (DEEEAVVLNQNSSSSDSNSKPH). Residues 608–624 (VVLNQNSSSSDSNSKPH) show a composition bias toward low complexity.

The protein belongs to the multicopper oxidase family. Requires Cu cation as cofactor.

The protein resides in the cell membrane. Functionally, iron transport multicopper ferroxidase required for Fe(2+) high affinity uptake. Required to oxidize Fe(2+) and release it from the transporter. Essential component of copper-dependent iron transport. The polypeptide is Iron transport multicopper oxidase FET3 (FET3) (Candida albicans (Yeast)).